We begin with the raw amino-acid sequence, 272 residues long: MNNRVHQGHFARKRFGQNFLTDSYIIESIVESIYPQPGEAVIEIGPGLGALTEPVGERMDKMTVVEIDRDLAARLEVHPTLKDKLTIIQQDAMTIDFAQLAKERQQPLRVFGNLPYNISTPLMFHLFSFADAISDMTFMLQKEVVNRLVASHGSKTYGRLSVMAQYHCQVIPIIEVPPSSFKPAPKVDSAVVRLIPYKEKPYPVTDIAMLSRITSQAFNQRRKTLRNSLGGLLTAEDMLALDIDPTARAENISVEQYCKVANWLSSQQQHAE.

Residues Asn18, Leu20, Gly45, Glu66, Asp91, and Asn113 each coordinate S-adenosyl-L-methionine.

Belongs to the class I-like SAM-binding methyltransferase superfamily. rRNA adenine N(6)-methyltransferase family. RsmA subfamily.

It is found in the cytoplasm. It carries out the reaction adenosine(1518)/adenosine(1519) in 16S rRNA + 4 S-adenosyl-L-methionine = N(6)-dimethyladenosine(1518)/N(6)-dimethyladenosine(1519) in 16S rRNA + 4 S-adenosyl-L-homocysteine + 4 H(+). Functionally, specifically dimethylates two adjacent adenosines (A1518 and A1519) in the loop of a conserved hairpin near the 3'-end of 16S rRNA in the 30S particle. May play a critical role in biogenesis of 30S subunits. The chain is Ribosomal RNA small subunit methyltransferase A from Proteus mirabilis (strain HI4320).